The sequence spans 1353 residues: MSDNRLFTSVETLNLSSPVLEKLKLSGINTLEDFNTFTLEELRLLLQEAFLEVLPILKNFALPRNLQNLDLSEAVINILTELGMEDFQDLLQTKMAVLTKSFETNPLAFQKLNDLFKLYNHFPSISSDKEYGSRDYDYFKIRLAAPEEIRQWSYGEVTSYETINYRTYKPEISGLFCQKIFGPVVDFQCACSKKQVSIKSQFCNKCGVEFTETKVRRERMGHIELQTPIVHTWYLNSSPSRLAILLNIKTKQLEEIVYYVSYVVIDPGKTEFKPKEIITETQYSEALYEFGNTFVALTGAEAVKKLLENLNLEKTIKVLRKSLSENSKQKRESIIKRLEIIESFHQSDNKPEWMVMDVIPVLPPGLRPMVPLDGGRFATTEVNDLYRRILNRNNRLKKQMLQKAPRLIIKNEKRMLQEAVDALFDNTKTSKKNVNNVEKNRPLKSLSEMLRGKQGRFRQNLLGKRVDYSGRSVIIVGPDLEMHQCGVPREMAIILFKPFILKKLQETKGIDKKNANTIYEKMNEEVWNALEEVVKEHPVLLNRAPTLHRLGIQAFDPKLIDGKAIRLHPLVTPAFNADFDGDQMAIYVPLSLEAQAEARLLMLVSNNILDPKNGNPVVTPSQDMVLGNYYLTIEEKKDRTINSYDSAQRTAEHQFKHRNEGTFFADINEAKTAYQNKEIHLHTRIFIKPQTINLSFTEEQRQKYLMTTLGKLIFNDILPPSFPYINEPTQFNLDVKTPDAYFLPPGTNPKQFLKKLPTPKPFNKKFLSMIIACFFKQMKITETSKMLDHIKNLGFKYSTIAGITVSFADINTYSNKQELLQEVETRNIQIETWHKDGFLTDAERRRLVINEWKTIRDEIQEGLMKEFKQDNHIFMMSESGARGSVSNFTQLAGMRGLMNNPKGEIIEVPVKASFREGLKVSEFFISTHGARKGSTDTALKTAESGYLTRRLVDVTQDIVVIKEDCNSDRGFIVEAMMSDGKEIVSLKKRIMGRFASCDICHPKTNTLIVARNELIIESKAQEIITAKIKKVPIRSILTCNCEYGICAKDYGVNLATNKLVEIGEAVGVIAAQSIGEPGTQLTMRTFHTGGVASASDITQGLPRIEELFEVRKPKGKALISELKGKIKKIDKIRSQNPEIVITEENDPDTEHRYILEPNVDILVSKNNIVYPGQKLTSGSVDLKELLRVAGTTEVQKYILEEVQKVYRAQNVYISDKHIEIIIHQMFKQILIIDEGDTHLLPGTEITINKFKKANLKMLEEKKRLAVGRPIILGITRSSLRSDSLLSAASFQETTKILIDAAIKGKTDHLYGLKENVIIGGLIPAGTGILETTLFKYPKEPATTSELTKKTNQN.

Residues 1-117 (MSDNRLFTSV…AFQKLNDLFK (117 aa)) are unknown. The DNA-directed RNA polymerase subunit beta' stretch occupies residues 118 to 1353 (LYNHFPSISS…SELTKKTNQN (1236 aa)). Zn(2+)-binding residues include cysteine 189, cysteine 191, cysteine 203, and cysteine 206. Residues aspartate 578, aspartate 580, and aspartate 582 each coordinate Mg(2+).

It belongs to the RNA polymerase beta' chain family. As to quaternary structure, the RNAP catalytic core consists of 2 alpha, 1 beta, 1 beta' and 1 omega subunit. When a sigma factor is associated with the core the holoenzyme is formed, which can initiate transcription. Mg(2+) serves as cofactor. The cofactor is Zn(2+).

The catalysed reaction is RNA(n) + a ribonucleoside 5'-triphosphate = RNA(n+1) + diphosphate. Its function is as follows. DNA-dependent RNA polymerase catalyzes the transcription of DNA into RNA using the four ribonucleoside triphosphates as substrates. This Aster yellows witches'-broom phytoplasma (strain AYWB) protein is DNA-directed RNA polymerase subunit beta'.